Consider the following 784-residue polypeptide: Ribosome biogenesis protein BOP1 homolog (784 aa).

A compositionally biased stretch (basic residues) spans 1–11 (MTKKLALKRRG). The tract at residues 1 to 159 (MTKKLALKRR…DSDTSDEEDI (159 aa)) is disordered. Composition is skewed to acidic residues over residues 27–36 (SENEEEEEDL), 45–54 (EDSTDDEGID), 62–73 (SEELQFESDEEG), and 84–111 (AEEDEESSDEEDNEEEESTDGEEVEDEE). Composition is skewed to basic and acidic residues over residues 112–123 (KDSKSKQTDDKP) and 138–148 (LPKRDSSKPEY). The segment covering 149–158 (QDSDTSDEED) has biased composition (acidic residues). WD repeat units follow at residues 445 to 486 (GHTD…RTIE), 488 to 526 (DEVVRCVAWCPNPKLSIIAVATGNRLLLVNPKVGDKVLV), 570 to 612 (THFK…SQIP), 615 to 653 (KSKGLIQFVLFHPVKPCFFVATQHNIRIYDLVKQELVKK), 656 to 695 (TNSKWISGMSIHPKGDNLLVSTYDKKMLWFDLDLSTKPYQ), 699 to 738 (LHRNAVRSVAFHLRYPLFASGSDDQAVIVSHGMVYNDLLQ), and 754 to 784 (RDEFGVLDVNWHPVQPWVFSTGADSTIRLYT).

This sequence belongs to the WD repeat BOP1/ERB1 family.

The protein localises to the nucleus. It localises to the nucleolus. It is found in the nucleoplasm. Required for maturation of ribosomal RNAs and formation of the large ribosomal subunit. This is Ribosome biogenesis protein BOP1 homolog from Drosophila melanogaster (Fruit fly).